The following is a 306-amino-acid chain: MRHFLTLNDFSKAEILEILSLADKIKKETKNKKYEPYLKNQTLAMIFEKSSTRTRVSFETGIYQLGGQGLFLSSRDIQLGRGEPIKDTARVISSMVDMAMLRVYKQSDLVEFAKFSSVPVINGLSDDLHPVQLMADYMTIKEIANGETIAYIGDGNNMSNSWLMLASILGLELHIATPKGYEPNKNFINIAKENAKISGAKILLTHNPKEAIEGANVVATDTWISMGQEDEKERKVKDFESFCVNKNLMSLACKDAILLHCLPAYRGYEVSDKVFESHARDIFLEAENRLHAQKGIMVWLDAHRND.

Carbamoyl phosphate contacts are provided by residues 51 to 54 (STRT), Gln78, Arg102, and 129 to 132 (HPVQ). L-ornithine is bound by residues Asn157, Asp221, and 225 to 226 (SM). Residues 261-262 (CL) and Arg289 contribute to the carbamoyl phosphate site.

It belongs to the aspartate/ornithine carbamoyltransferase superfamily. OTCase family.

Its subcellular location is the cytoplasm. The catalysed reaction is carbamoyl phosphate + L-ornithine = L-citrulline + phosphate + H(+). Its pathway is amino-acid biosynthesis; L-arginine biosynthesis; L-arginine from L-ornithine and carbamoyl phosphate: step 1/3. In terms of biological role, reversibly catalyzes the transfer of the carbamoyl group from carbamoyl phosphate (CP) to the N(epsilon) atom of ornithine (ORN) to produce L-citrulline. The chain is Ornithine carbamoyltransferase from Campylobacter hominis (strain ATCC BAA-381 / DSM 21671 / CCUG 45161 / LMG 19568 / NCTC 13146 / CH001A).